A 205-amino-acid polypeptide reads, in one-letter code: Small ribosomal subunit protein uS4B (205 aa).

Positions 94-157 (RRLDNVVFRA…LNLPIVLGTL (64 aa)) constitute an S4 RNA-binding domain.

The protein belongs to the universal ribosomal protein uS4 family. As to quaternary structure, part of the 30S ribosomal subunit. Contacts protein S5. The interaction surface between S4 and S5 is involved in control of translational fidelity.

Functionally, one of the primary rRNA binding proteins, it binds directly to 16S rRNA where it nucleates assembly of the body of the 30S subunit. Its function is as follows. With S5 and S12 plays an important role in translational accuracy. In Nitrosomonas europaea (strain ATCC 19718 / CIP 103999 / KCTC 2705 / NBRC 14298), this protein is Small ribosomal subunit protein uS4B.